We begin with the raw amino-acid sequence, 359 residues long: 3-dehydroquinate synthase (359 aa).

Residues 72–77, 106–110, 130–131, lysine 143, lysine 152, and 170–173 each bind NAD(+); these read EGEIHK, GVIGD, TS, and CLKT. Zn(2+)-binding residues include glutamate 185, histidine 248, and histidine 264.

This sequence belongs to the sugar phosphate cyclases superfamily. Dehydroquinate synthase family. Co(2+) is required as a cofactor. It depends on Zn(2+) as a cofactor. The cofactor is NAD(+).

It localises to the cytoplasm. It carries out the reaction 7-phospho-2-dehydro-3-deoxy-D-arabino-heptonate = 3-dehydroquinate + phosphate. It participates in metabolic intermediate biosynthesis; chorismate biosynthesis; chorismate from D-erythrose 4-phosphate and phosphoenolpyruvate: step 2/7. Its function is as follows. Catalyzes the conversion of 3-deoxy-D-arabino-heptulosonate 7-phosphate (DAHP) to dehydroquinate (DHQ). This is 3-dehydroquinate synthase from Dehalococcoides mccartyi (strain ATCC BAA-2100 / JCM 16839 / KCTC 5957 / BAV1).